The following is a 151-amino-acid chain: SsrA-binding protein (151 aa).

It belongs to the SmpB family.

It localises to the cytoplasm. Required for rescue of stalled ribosomes mediated by trans-translation. Binds to transfer-messenger RNA (tmRNA), required for stable association of tmRNA with ribosomes. tmRNA and SmpB together mimic tRNA shape, replacing the anticodon stem-loop with SmpB. tmRNA is encoded by the ssrA gene; the 2 termini fold to resemble tRNA(Ala) and it encodes a 'tag peptide', a short internal open reading frame. During trans-translation Ala-aminoacylated tmRNA acts like a tRNA, entering the A-site of stalled ribosomes, displacing the stalled mRNA. The ribosome then switches to translate the ORF on the tmRNA; the nascent peptide is terminated with the 'tag peptide' encoded by the tmRNA and targeted for degradation. The ribosome is freed to recommence translation, which seems to be the essential function of trans-translation. This chain is SsrA-binding protein, found in Nitrosomonas europaea (strain ATCC 19718 / CIP 103999 / KCTC 2705 / NBRC 14298).